Consider the following 811-residue polypeptide: Mitochondrial intermediate peptidase (811 aa).

Residues 1-25 constitute a mitochondrion transit peptide; it reads MRSGSRLSNYLVRLSGRVSFTQKRS. The segment at 423–450 is disordered; the sequence is TENGEKASTDTSTSTTTSTTTTDSTTTT. Over residues 431–450 the composition is skewed to low complexity; that stretch reads TDTSTSTTTSTTTTDSTTTT. Histidine 593 contributes to the Zn(2+) binding site. Glutamate 594 is an active-site residue. Zn(2+)-binding residues include histidine 597 and histidine 600.

Belongs to the peptidase M3 family. Zn(2+) is required as a cofactor.

Its subcellular location is the mitochondrion matrix. It carries out the reaction Release of an N-terminal octapeptide as second stage of processing of some proteins imported into the mitochondrion.. Cleaves proteins, imported into the mitochondrion, to their mature size. While most mitochondrial precursor proteins are processed to the mature form in one step by mitochondrial processing peptidase (MPP), the sequential cleavage by MIP of an octapeptide after initial processing by MPP is a required step for a subgroup of nuclear-encoded precursor proteins destined for the matrix or the inner membrane. This chain is Mitochondrial intermediate peptidase (OCT1), found in Lodderomyces elongisporus (strain ATCC 11503 / CBS 2605 / JCM 1781 / NBRC 1676 / NRRL YB-4239) (Yeast).